Consider the following 305-residue polypeptide: Ribonuclease BN (305 aa).

Zn(2+) is bound by residues His64, His66, Asp68, His69, His141, Asp212, and His270. Asp68 (proton acceptor) is an active-site residue.

The protein belongs to the RNase Z family. RNase BN subfamily. Homodimer. It depends on Zn(2+) as a cofactor.

In terms of biological role, zinc phosphodiesterase, which has both exoribonuclease and endoribonuclease activities. This chain is Ribonuclease BN, found in Enterobacter sp. (strain 638).